The following is a 346-amino-acid chain: Protein farnesyltransferase/geranylgeranyltransferase type-1 subunit alpha (346 aa).

PFTA repeat units lie at residues 59–93 (RSTRALQLTGEAIQLNPGNYTVWQFRRVVLEALGV), 94–128 (DLREELKFVDRIAGENTKNYQIWHHRRWLAEKLGA), 130–164 (AVTNELEFTKKIFSQDAKNYHAWSHRQWVLQALGG), 165–198 (WEDELAYCQQLLEDDIYNNSAWNQRYFVVTRSPL), and 205–239 (MRELEVNYTVQAIRASPENESPWRYLRGLYKNDTQ).

It belongs to the protein prenyltransferase subunit alpha family. As to quaternary structure, heterodimer of an alpha and a beta subunit. Requires Mg(2+) as cofactor.

The catalysed reaction is L-cysteinyl-[protein] + (2E,6E)-farnesyl diphosphate = S-(2E,6E)-farnesyl-L-cysteinyl-[protein] + diphosphate. The enzyme catalyses geranylgeranyl diphosphate + L-cysteinyl-[protein] = S-geranylgeranyl-L-cysteinyl-[protein] + diphosphate. Essential subunit of both the farnesyltransferase and the geranylgeranyltransferase complex. Contributes to the transfer of a farnesyl or geranylgeranyl moiety from farnesyl or geranylgeranyl diphosphate to a cysteine at the fourth position from the C-terminus of several proteins having the C-terminal sequence Cys-aliphatic-aliphatic-X. The polypeptide is Protein farnesyltransferase/geranylgeranyltransferase type-1 subunit alpha (FTA) (Solanum lycopersicum (Tomato)).